A 1281-amino-acid polypeptide reads, in one-letter code: Enterobactin synthase component F (1281 aa).

The elongation/condensation stretch occupies residues 1–301; it reads MSQHLPLVAA…NVLPLGIHIA (301 aa). Residues 486 to 891 form an adenylation region; the sequence is SYREMHEQVV…ALPDVKQAVT (406 aa). Residues 975 to 1050 enclose the Carrier domain; sequence APKAGSETII…KLATIIDGEE (76 aa). The residue at position 1010 (serine 1010) is an O-(pantetheine 4'-phosphoryl)serine. The segment at 1070 to 1281 is thioesterase; the sequence is PTLFCFHPAS…GPIIRATLNR (212 aa). The active-site Proton acceptor; for thioesterase activity is the histidine 1259.

Belongs to the ATP-dependent AMP-binding enzyme family. EntF subfamily. In terms of assembly, proteins EntB, EntD, EntE and EntF are the component of the enterobactin synthase. Components probably do not form a stable complex. EntF acts as a catalytic monomer. Pantetheine 4'-phosphate serves as cofactor. Post-translationally, 4'-phosphopantetheine is transferred from CoA to a specific serine of apo-EntF by EntD. Holo-EntF so formed is then acylated with seryl-AMP.

The protein resides in the cytoplasm. The enzyme catalyses 3 2,3-dihydroxybenzoate + 3 L-serine + 6 ATP = enterobactin + 6 AMP + 6 diphosphate + 4 H(+). It carries out the reaction holo-[peptidyl-carrier protein] + L-serine + ATP = L-seryl-[peptidyl-carrier protein] + AMP + diphosphate. Its pathway is siderophore biosynthesis; enterobactin biosynthesis. Functionally, involved in the biosynthesis of the siderophore enterobactin (enterochelin), which is a macrocyclic trimeric lactone of N-(2,3-dihydroxybenzoyl)-serine. EntF catalyzes the activation of L-serine via ATP-dependent PPi exchange reaction to form seryladenylate. Activated L-serine is loaded onto the peptidyl carrier domain via a thioester linkage to the phosphopanthetheine moiety, forming seryl-S-Ppant-EntF. EntF acts then as the sole catalyst for the formation of the three amide and three ester linkages found in enterobactin, using seryladenylate and 2,3-dihydroxybenzoate-S-Ppant-EntB (DHB-S-Ppant-EntB) as substrates, via the formation of a DHB-Ser-S-Ppant-EntF intermediate. The chain is Enterobactin synthase component F (entF) from Shigella flexneri.